Reading from the N-terminus, the 296-residue chain is tRNA dimethylallyltransferase (296 aa).

Position 9 to 16 (9 to 16 (GPTAVGKT)) interacts with ATP. 11–16 (TAVGKT) is a binding site for substrate. The interval 34–37 (DSRQ) is interaction with substrate tRNA.

It belongs to the IPP transferase family. As to quaternary structure, monomer. Mg(2+) serves as cofactor.

The enzyme catalyses adenosine(37) in tRNA + dimethylallyl diphosphate = N(6)-dimethylallyladenosine(37) in tRNA + diphosphate. In terms of biological role, catalyzes the transfer of a dimethylallyl group onto the adenine at position 37 in tRNAs that read codons beginning with uridine, leading to the formation of N6-(dimethylallyl)adenosine (i(6)A). This Chloroflexus aurantiacus (strain ATCC 29366 / DSM 635 / J-10-fl) protein is tRNA dimethylallyltransferase.